The following is a 509-amino-acid chain: Steroid 17-alpha-hydroxylase/17,20 lyase (509 aa).

Residue Cys445 coordinates heme.

It belongs to the cytochrome P450 family. Requires heme as cofactor.

The protein localises to the membrane. It catalyses the reaction a C21-steroid + reduced [NADPH--hemoprotein reductase] + O2 = a 17alpha-hydroxy-C21-steroid + oxidized [NADPH--hemoprotein reductase] + H2O + H(+). The enzyme catalyses 17alpha-hydroxyprogesterone + reduced [NADPH--hemoprotein reductase] + O2 = androst-4-ene-3,17-dione + acetate + oxidized [NADPH--hemoprotein reductase] + H2O + 2 H(+). The catalysed reaction is 17alpha-hydroxypregnenolone + reduced [NADPH--hemoprotein reductase] + O2 = 3beta-hydroxyandrost-5-en-17-one + acetate + oxidized [NADPH--hemoprotein reductase] + H2O + 2 H(+). The protein operates within lipid metabolism; steroid biosynthesis. Conversion of pregnenolone and progesterone to their 17-alpha-hydroxylated products and subsequently to dehydroepiandrosterone (DHEA) and androstenedione. Catalyzes both the 17-alpha-hydroxylation and the 17,20-lyase reaction. The protein is Steroid 17-alpha-hydroxylase/17,20 lyase (CYP17A1) of Squalus acanthias (Spiny dogfish).